A 258-amino-acid polypeptide reads, in one-letter code: MGACCSSRRNRSPSLAALAEETEVVLRCLAGRVVDLPGGDEVRIAPDVGRPGQNFGYFKFPGPSRFAYVKFIGRAYALGSGRKFLLYLSRNFQVFGYEDGTGLHMLAKSLHDFLKFKGLSDRDLVVVDSVALTSQLRPLTLPIRSTSDVETLVAEEATTNYTSTENLLGQTQSSTHRPLGVPLSNVKTMGVPPTKPSSQRPRGKGGRPPARLKSIREETVSGMARAREECNSPSEHDRLTSEMTDCDTTRRYPPSFFK.

Over residues 163–176 the composition is skewed to polar residues; sequence STENLLGQTQSSTH. A disordered region spans residues 163-258; it reads STENLLGQTQ…TRRYPPSFFK (96 aa). Residues 214–240 show a composition bias toward basic and acidic residues; sequence SIREETVSGMARAREECNSPSEHDRLT.

The chain is Gene 3 protein from Equine herpesvirus 1 (strain Kentucky A) (EHV-1).